Reading from the N-terminus, the 558-residue chain is Magnesium-chelatase 60 kDa subunit (558 aa).

2 disordered regions span residues 234-268 (MPASEEAPPEPEPEPPEDQPDDSPPPPEQQQGEEM) and 298-325 (MARGATGTGSAKAGNRRGRPLPSRMGRL). A compositionally biased stretch (acidic residues) spans 240-254 (APPEPEPEPPEDQPD). Residues 298 to 308 (MARGATGTGSA) show a composition bias toward low complexity. A VWFA domain is found at 376–555 (VLIFAVDASG…HKLSNVLGAA (180 aa)).

Belongs to the Mg-chelatase subunits D/I family.

It carries out the reaction protoporphyrin IX + Mg(2+) + ATP + H2O = Mg-protoporphyrin IX + ADP + phosphate + 3 H(+). It participates in porphyrin-containing compound metabolism; bacteriochlorophyll biosynthesis. Its function is as follows. Involved in bacteriochlorophyll biosynthesis; introduces a magnesium ion into protoporphyrin IX to yield Mg-protoporphyrin IX. In Cereibacter sphaeroides (strain ATCC 17023 / DSM 158 / JCM 6121 / CCUG 31486 / LMG 2827 / NBRC 12203 / NCIMB 8253 / ATH 2.4.1.) (Rhodobacter sphaeroides), this protein is Magnesium-chelatase 60 kDa subunit (bchD).